A 330-amino-acid polypeptide reads, in one-letter code: MTLIVTGAAGFIGSNLVKALNERGEQRIIAVDNLTRADKFKNLVDCEIDDYLDKTEFVERFRRGDFGKVRAIFHEGACSDTMETDGRYMMDNNFRYSRDVLDVCLAQNIQFLYASSAATYGGSSRFVEEREVEQPLNVYGYSKFLFDQVIRRVLPTAKSQIAGFRYFNVYGPRETHKARMASVAFHNFNQFRAEGKVKLFGEYNGYAAGEQTRDFVSVEDVVKVNLFFFDNPDKSGIFNLGSGRAQPFNDIASTVVNTLRSLNNEPALSLADQVQRGLIEYIPFPDALRGKYQCFTQADQSKLRAAGYDAPFLSVQEGVDRYVRWLFGQV.

Residues 11–12 (FI), 32–33 (DN), Lys39, Lys54, 75–79 (EGACS), and Asn92 each bind NADP(+). Residue Tyr139 is the Proton acceptor of the active site. Lys143 contacts NADP(+). Asn168 provides a ligand contact to substrate. NADP(+) is bound by residues Val169 and Lys177. Lys177 functions as the Proton acceptor in the catalytic mechanism. Substrate is bound by residues Arg179, His186, 200–203 (FGEY), Arg213, and Tyr292.

Belongs to the NAD(P)-dependent epimerase/dehydratase family. HldD subfamily. As to quaternary structure, homopentamer. The cofactor is NADP(+).

The catalysed reaction is ADP-D-glycero-beta-D-manno-heptose = ADP-L-glycero-beta-D-manno-heptose. The protein operates within nucleotide-sugar biosynthesis; ADP-L-glycero-beta-D-manno-heptose biosynthesis; ADP-L-glycero-beta-D-manno-heptose from D-glycero-beta-D-manno-heptose 7-phosphate: step 4/4. In terms of biological role, catalyzes the interconversion between ADP-D-glycero-beta-D-manno-heptose and ADP-L-glycero-beta-D-manno-heptose via an epimerization at carbon 6 of the heptose. This Paraburkholderia phytofirmans (strain DSM 17436 / LMG 22146 / PsJN) (Burkholderia phytofirmans) protein is ADP-L-glycero-D-manno-heptose-6-epimerase.